Here is a 462-residue protein sequence, read N- to C-terminus: Glutamate-1-semialdehyde 2,1-aminomutase (462 aa).

The disordered stretch occupies residues 178 to 200; the sequence is DDPQRPASPRSQSSRGLPSSPGV. Residues 182 to 192 show a composition bias toward low complexity; the sequence is RPASPRSQSSR. Lysine 297 is modified (N6-(pyridoxal phosphate)lysine).

Belongs to the class-III pyridoxal-phosphate-dependent aminotransferase family. HemL subfamily. Homodimer. The cofactor is pyridoxal 5'-phosphate.

The protein localises to the cytoplasm. It catalyses the reaction (S)-4-amino-5-oxopentanoate = 5-aminolevulinate. Its pathway is porphyrin-containing compound metabolism; protoporphyrin-IX biosynthesis; 5-aminolevulinate from L-glutamyl-tRNA(Glu): step 2/2. In Mycobacterium bovis (strain ATCC BAA-935 / AF2122/97), this protein is Glutamate-1-semialdehyde 2,1-aminomutase (hemL).